The primary structure comprises 110 residues: Large ribosomal subunit protein uL22 (110 aa).

The protein belongs to the universal ribosomal protein uL22 family. Part of the 50S ribosomal subunit.

This protein binds specifically to 23S rRNA; its binding is stimulated by other ribosomal proteins, e.g. L4, L17, and L20. It is important during the early stages of 50S assembly. It makes multiple contacts with different domains of the 23S rRNA in the assembled 50S subunit and ribosome. Its function is as follows. The globular domain of the protein is located near the polypeptide exit tunnel on the outside of the subunit, while an extended beta-hairpin is found that lines the wall of the exit tunnel in the center of the 70S ribosome. This Vibrio parahaemolyticus serotype O3:K6 (strain RIMD 2210633) protein is Large ribosomal subunit protein uL22.